A 63-amino-acid polypeptide reads, in one-letter code: Translational regulator CsrA (63 aa).

The protein belongs to the CsrA/RsmA family. In terms of assembly, homodimer; the beta-strands of each monomer intercalate to form a hydrophobic core, while the alpha-helices form wings that extend away from the core.

The protein localises to the cytoplasm. Functionally, a key translational regulator that binds mRNA to regulate translation initiation and/or mRNA stability. Mediates global changes in gene expression, shifting from rapid growth to stress survival by linking envelope stress, the stringent response and the catabolite repression systems. Usually binds in the 5'-UTR; binding at or near the Shine-Dalgarno sequence prevents ribosome-binding, repressing translation, binding elsewhere in the 5'-UTR can activate translation and/or stabilize the mRNA. Its function is antagonized by small RNA(s). The polypeptide is Translational regulator CsrA (Alteromonas mediterranea (strain DSM 17117 / CIP 110805 / LMG 28347 / Deep ecotype)).